The sequence spans 531 residues: Zinc finger CCCH-type with G patch domain-containing protein (531 aa).

N-acetylmethionine is present on methionine 1. Positions 91 to 133 (EAPAAARGSGSETVPKAEAGPESAAGGQEEEEGEDEEELSGTK) are disordered. Positions 107-117 (AEAGPESAAGG) are enriched in low complexity. Residues 118-129 (QEEEEGEDEEEL) show a composition bias toward acidic residues. The C3H1-type zinc-finger motif lies at 175–201 (KSLKPCPFFLEGKCRFKENCRFSHGQV). The disordered stretch occupies residues 267 to 289 (PPLRTEATESDSDSDGTGDSSYA). The 47-residue stretch at 333 to 379 (TRGIGSRLLTKMGYEFGKGLGRHAEGRVEPIHAVVLPRGKSLDQCVE) folds into the G-patch domain. Serine 373 is modified (phosphoserine). 3 disordered regions span residues 385-409 (TRVG…GGRP), 426-446 (APGA…DMYH), and 509-531 (RAQE…MTEF). The span at 426–438 (APGALEAGAAPAG) shows a compositional bias: low complexity. The segment covering 518–531 (EQRKADTHKKMTEF) has biased composition (basic and acidic residues).

In terms of assembly, interacts with CHD4/Mi-2; the interaction is direct. Ubiquitinated in case of infection by HIV-1, leading to its degradation. Ubiquitination is mediated by the CUL4A-RBX1-DDB1-DCAF1/VPRBP complex that is hijacked by HIV-1 via interaction between HIV-1 Vpr and DCAF1/VPRBP. As to expression, widely expressed.

Its subcellular location is the nucleus. Its function is as follows. Transcription repressor that specifically binds the 5'-GGAG[GA]A[GA]A-3' consensus sequence. Represses transcription by recruiting the chromatin multiprotein complex NuRD to target promoters. Negatively regulates expression of EGFR, a gene involved in cell proliferation, survival and migration. Its ability to repress genes of the EGFR pathway suggest it may act as a tumor suppressor. Able to suppress breast carcinogenesis. Antagonizes the transcription repression by isoform 1 by competing for the binding of the NuRD complex. Does not bind DNA. In Homo sapiens (Human), this protein is Zinc finger CCCH-type with G patch domain-containing protein (ZGPAT).